Consider the following 269-residue polypeptide: Small ribosomal subunit protein uS2 (269 aa).

A disordered region spans residues A224–E269. Residues D230–E269 are compositionally biased toward acidic residues.

It belongs to the universal ribosomal protein uS2 family.

This chain is Small ribosomal subunit protein uS2, found in Finegoldia magna (strain ATCC 29328 / DSM 20472 / WAL 2508) (Peptostreptococcus magnus).